The primary structure comprises 454 residues: Glycosyl hydrolase family 109 protein (454 aa).

A signal peptide (tat-type signal) is located at residues 1 to 29; it reads MFAMKRREFIAASAAVAASSLLPQTPAWA. Residues 43-44, aspartate 65, 116-119, 136-137, and asparagine 165 each bind NAD(+); these read MR, WEYH, and EV. Tyrosine 194 contacts substrate. An NAD(+)-binding site is contributed by 224–228; the sequence is SEARW. Residues arginine 229, 241–244, and tyrosine 324 each bind substrate; that span reads YPSH. Position 241 (tyrosine 241) interacts with NAD(+).

The protein belongs to the Gfo/Idh/MocA family. Glycosyl hydrolase 109 subfamily. Requires NAD(+) as cofactor. In terms of processing, predicted to be exported by the Tat system. The position of the signal peptide cleavage has not been experimentally proven.

Glycosidase. The sequence is that of Glycosyl hydrolase family 109 protein from Stenotrophomonas maltophilia (strain K279a).